The chain runs to 167 residues: HTH-type transcriptional repressor YetL (167 aa).

The region spanning 26 to 160 (SLELFLSLFD…FVKMLGDLFE (135 aa)) is the HTH marR-type domain. Positions 74-97 (PTELAKRSNVTKATITGLLDGLAR) form a DNA-binding region, H-T-H motif.

As to quaternary structure, homodimer. The N- and C-terminal helices from both subunits stabilize YetL dimer via extensive intersubunit interactions.

Its activity is regulated as follows. Binding to the yetM cis sequence is clearly inhibited by kaempferol, morin, apigenin and luteolin, slightly inhibited by quercetin and galangin, but no inhibition is observed with the other flavonoids. Flavonoid binding may induce conformational changes and modulate interaction with DNA. Functionally, negatively regulates yetM expression and its own expression. Binds specifically to corresponding single sites in the divergent yetL and yetM promoter regions, with higher affinity to the yetM region. Recognizes a 28-mer operator of double-stranded DNA that contains a palindromic sequence. The chain is HTH-type transcriptional repressor YetL (yetL) from Bacillus subtilis (strain 168).